Reading from the N-terminus, the 361-residue chain is Phospho-N-acetylmuramoyl-pentapeptide-transferase (361 aa).

10 helical membrane-spanning segments follow: residues 26-46, 73-93, 97-117, 134-154, 168-188, 200-220, 237-257, 264-284, 289-309, and 340-360; these read AILG…VMIR, TMGG…WADL, YVWV…VDDY, YFWQ…TASM, VSLT…IVGS, GLAI…AYLS, TGEL…FLWF, VFMG…VAVI, IVLF…ILQV, and IVRF…SLKI.

Belongs to the glycosyltransferase 4 family. MraY subfamily. Requires Mg(2+) as cofactor.

The protein resides in the cell inner membrane. The enzyme catalyses UDP-N-acetyl-alpha-D-muramoyl-L-alanyl-gamma-D-glutamyl-meso-2,6-diaminopimeloyl-D-alanyl-D-alanine + di-trans,octa-cis-undecaprenyl phosphate = di-trans,octa-cis-undecaprenyl diphospho-N-acetyl-alpha-D-muramoyl-L-alanyl-D-glutamyl-meso-2,6-diaminopimeloyl-D-alanyl-D-alanine + UMP. The protein operates within cell wall biogenesis; peptidoglycan biosynthesis. In terms of biological role, catalyzes the initial step of the lipid cycle reactions in the biosynthesis of the cell wall peptidoglycan: transfers peptidoglycan precursor phospho-MurNAc-pentapeptide from UDP-MurNAc-pentapeptide onto the lipid carrier undecaprenyl phosphate, yielding undecaprenyl-pyrophosphoryl-MurNAc-pentapeptide, known as lipid I. In Marinobacter nauticus (strain ATCC 700491 / DSM 11845 / VT8) (Marinobacter aquaeolei), this protein is Phospho-N-acetylmuramoyl-pentapeptide-transferase.